A 146-amino-acid polypeptide reads, in one-letter code: Ribonuclease H (146 aa).

The RNase H type-1 domain maps to 1 to 143 (MQKKIIVYTD…CDELARQAIK (143 aa)). 4 residues coordinate Mg(2+): D10, E48, D70, and D135.

It belongs to the RNase H family. Monomer. Mg(2+) is required as a cofactor.

It localises to the cytoplasm. The enzyme catalyses Endonucleolytic cleavage to 5'-phosphomonoester.. Its function is as follows. Endonuclease that specifically degrades the RNA of RNA-DNA hybrids. This Chlorobium phaeobacteroides (strain DSM 266 / SMG 266 / 2430) protein is Ribonuclease H.